The following is a 192-amino-acid chain: 21.7 kDa class VI heat shock protein (192 aa).

Positions 80–192 constitute a sHSP domain; sequence SLRSLGQCRV…IPKINSKNKF (113 aa).

Belongs to the small heat shock protein (HSP20) family. In terms of assembly, may form oligomeric structures.

The protein localises to the cytoplasm. In Arabidopsis thaliana (Mouse-ear cress), this protein is 21.7 kDa class VI heat shock protein (HSP21.7).